The chain runs to 403 residues: S-adenosylmethionine sensor upstream of mTORC1 (403 aa).

The span at 1–10 shows a compositional bias: gly residues; that stretch reads MEPGPGGRGA. A disordered region spans residues 1 to 32; the sequence is MEPGPGGRGAARGQRPPNAAQPREQERKLEQE. Positions 11–22 are enriched in low complexity; it reads ARGQRPPNAAQP. A compositionally biased stretch (basic and acidic residues) spans 23–32; sequence REQERKLEQE. The S-adenosyl-L-methionine site is built by R93, G170, D188, D200, F201, and S242.

Belongs to the BMT2/SAMTOR family. Interacts with the GATOR1 complex; interaction is disrupted when SAMTOR binds S-adenosyl-L-methionine. Interacts with the KICSTOR complex; interaction is disrupted when SAMTOR binds S-adenosyl-L-methionine.

Functionally, S-adenosyl-L-methionine-binding protein that acts as an inhibitor of mTORC1 signaling via interaction with the GATOR1 and KICSTOR complexes. Acts as a sensor of S-adenosyl-L-methionine to signal methionine sufficiency to mTORC1: in presence of methionine, binds S-adenosyl-L-methionine, leading to disrupt interaction with the GATOR1 and KICSTOR complexes and promote mTORC1 signaling. Upon methionine starvation, S-adenosyl-L-methionine levels are reduced, thereby promoting the association with GATOR1 and KICSTOR, leading to inhibit mTORC1 signaling. Probably also acts as a S-adenosyl-L-methionine-dependent methyltransferase. The polypeptide is S-adenosylmethionine sensor upstream of mTORC1 (Mus musculus (Mouse)).